A 241-amino-acid chain; its full sequence is MQNNNDILKAQSPAALAEEYIVKSIWQDVFPAGSNLPSERDLADKIGVTRTTLREVLQRLARDGWLTIQHGKPTKVNNIWDAAGPNIIETLIALDMQSAPLIIDNMLSLRSKMSESYIYEAVKNSPQKSTALFAELEQLQNTAQDYTEFDYQLFRQFTVVANKPFYRLIFNSLKGVYQRIGLLFFKEKKHRELTKQFYLEMQQICLEGNADAVVDCIRKHNLRSSTYWKAILERLPQNLSD.

In terms of domain architecture, HTH gntR-type spans 11–79 (QSPAALAEEY…HGKPTKVNNI (69 aa)). The H-T-H motif DNA-binding region spans 39-58 (ERDLADKIGVTRTTLREVLQ).

Homodimer.

Its subcellular location is the cytoplasm. Its function is as follows. Multifunctional regulator of fatty acid metabolism. This is Fatty acid metabolism regulator protein from Haemophilus influenzae (strain ATCC 51907 / DSM 11121 / KW20 / Rd).